We begin with the raw amino-acid sequence, 198 residues long: Large ribosomal subunit protein bL25 (198 aa).

The protein belongs to the bacterial ribosomal protein bL25 family. CTC subfamily. Part of the 50S ribosomal subunit; part of the 5S rRNA/L5/L18/L25 subcomplex. Contacts the 5S rRNA. Binds to the 5S rRNA independently of L5 and L18.

In terms of biological role, this is one of the proteins that binds to the 5S RNA in the ribosome where it forms part of the central protuberance. This chain is Large ribosomal subunit protein bL25, found in Azotobacter vinelandii (strain DJ / ATCC BAA-1303).